A 305-amino-acid chain; its full sequence is Translation initiation factor eIF2B subunit alpha (305 aa).

At Lys35 the chain carries N6-acetyllysine.

It belongs to the eIF-2B alpha/beta/delta subunits family. In terms of assembly, component of the translation initiation factor 2B (eIF2B) complex which is a heterodecamer of two sets of five different subunits: alpha, beta, gamma, delta and epsilon. Subunits alpha, beta and delta comprise a regulatory subcomplex and subunits epsilon and gamma comprise a catalytic subcomplex. Within the complex, the hexameric regulatory complex resides at the center, with the two heterodimeric catalytic subcomplexes bound on opposite sides.

The protein resides in the cytoplasm. It localises to the cytosol. Its activity is regulated as follows. Activated by the chemical integrated stress response (ISR) inhibitor ISRIB which stimulates guanine nucleotide exchange factor activity for both phosphorylated and unphosphorylated eIF2. In terms of biological role, acts as a component of the translation initiation factor 2B (eIF2B) complex, which catalyzes the exchange of GDP for GTP on eukaryotic initiation factor 2 (eIF2) gamma subunit. Its guanine nucleotide exchange factor activity is repressed when bound to eIF2 complex phosphorylated on the alpha subunit, thereby limiting the amount of methionyl-initiator methionine tRNA available to the ribosome and consequently global translation is repressed. The polypeptide is Translation initiation factor eIF2B subunit alpha (EIF2B1) (Pongo abelii (Sumatran orangutan)).